A 649-amino-acid polypeptide reads, in one-letter code: Macrolide export ATP-binding/permease protein MacB (649 aa).

An ABC transporter domain is found at 7 to 245; sequence IELKNIVRRY…SSAQEVTPQL (239 aa). 43-50 contacts ATP; it reads GASGSGKS. A run of 4 helical transmembrane segments spans residues 276 to 296, 529 to 549, 582 to 602, and 612 to 632; these read LLTMLGIIIGIAAVVCVIALG, IAFISLVVGGIGVMNIMLVSV, LLGGMLGVLLSLLLGGLFSAF, and FSSFLIAFVCSSMIGMIFGYF.

Belongs to the ABC transporter superfamily. Macrolide exporter (TC 3.A.1.122) family. Homodimer. Part of the tripartite efflux system MacAB-TolC, which is composed of an inner membrane transporter, MacB, a periplasmic membrane fusion protein, MacA, and an outer membrane component, TolC. The complex forms a large protein conduit and can translocate molecules across both the inner and outer membranes. Interacts with MacA.

It is found in the cell inner membrane. Its function is as follows. Part of the tripartite efflux system MacAB-TolC. MacB is a non-canonical ABC transporter that contains transmembrane domains (TMD), which form a pore in the inner membrane, and an ATP-binding domain (NBD), which is responsible for energy generation. Confers resistance against macrolides. In Pasteurella multocida (strain Pm70), this protein is Macrolide export ATP-binding/permease protein MacB.